Here is a 359-residue protein sequence, read N- to C-terminus: MNIYDQLQVVEDRYEELGELLSDPDVVSDTKRFMELSKEEASNRDTVIAYREYKQVLQNIVDAEEMIKESGGDADLEELAKQELKDAKAEKEEYEEKLKILLLPKDPNDDKNIILEIRGAAGGDEAALFAGDLLTMYQKYAEAQGWRFEVMEASMNGVGGFKEVVAMVSGQSVYSKLKYESGAHRVQRVPVTESQGRVHTSTATVLVMPEVEEVEYDIDPKDLRVDIYHASGAGGQNVNKVATAVRIVHLPTNIKVEMQEERTQQKNREKAMKIIRARVADHFAQIAQDEQDAERKSTIGTGDRSERIRTYNFPQNRVTDHRIGLTLQKLDTILSGKLDEVVDALVLYDQTQKLEELNK.

N5-methylglutamine is present on Gln236.

It belongs to the prokaryotic/mitochondrial release factor family. Post-translationally, methylated by PrmC. Methylation increases the termination efficiency of RF1.

The protein resides in the cytoplasm. Peptide chain release factor 1 directs the termination of translation in response to the peptide chain termination codons UAG and UAA. The chain is Peptide chain release factor 1 from Streptococcus pneumoniae serotype 4 (strain ATCC BAA-334 / TIGR4).